A 212-amino-acid polypeptide reads, in one-letter code: MHEEVQCGIDEAGRGPVIGPMVISIVCCKEEYLREIGVKDSKMLSRKRREYLFDKITKNCAYSYVVVSPETLNKDMASESLNKIEENYILELLSKAEGIVYIDCFDVIEERAEKYIREKSGKEVVCKHKADSIYPAVSAASIVSKVIRDREIDKIAEKYGFFGSGYPSDPRTIDFLRKAMQQGLDLRSVARIHWETYKKIKEDVESGQKKLF.

The RNase H type-2 domain occupies 4–206; it reads EVQCGIDEAG…YKKIKEDVES (203 aa). Residues Asp-10, Glu-11, and Asp-103 each coordinate a divalent metal cation.

Belongs to the RNase HII family. Requires Mn(2+) as cofactor. Mg(2+) serves as cofactor.

The protein localises to the cytoplasm. The enzyme catalyses Endonucleolytic cleavage to 5'-phosphomonoester.. Endonuclease that specifically degrades the RNA of RNA-DNA hybrids. This is Ribonuclease HII from Thermoplasma volcanium (strain ATCC 51530 / DSM 4299 / JCM 9571 / NBRC 15438 / GSS1).